The sequence spans 396 residues: Inhibitory POU protein (396 aa).

Positions 86–95 (RAEALAAVDI) match the POU-IV box motif. A POU-specific domain is found at 222–299 (DTDTDPRELE…ILQAWLEEAE (78 aa)). A disordered region spans residues 302 to 328 (AKNKRRDPDAPSVLPAGEKKRKRTSIA). Positions 320 to 377 (KKRKRTSIAAPEKRSLEAYFAVQPRPSGEKIAAIAEKLDLKKNVVRVWFCNQRQKQKR) form a DNA-binding region, homeobox; atypical.

Belongs to the POU transcription factor family. Class-4 subfamily. In terms of tissue distribution, coexpressed with vvl in overlapping subsets of neurons in the embryonic central nervous system. Expressed in olfactory neurons.

Its subcellular location is the nucleus. In terms of biological role, modulates gene transcription; simultaneously generates both a specific activator and an inhibitor of gene transcription, capable of modulating two distinct regulatory programs during neural development. Has a role in olfactory behavior. This chain is Inhibitory POU protein (acj6), found in Drosophila melanogaster (Fruit fly).